Here is a 121-residue protein sequence, read N- to C-terminus: Small ribosomal subunit protein uS13 (121 aa).

The interval 95-121 (GLPVRGQKTKTNARTRKGKRKTVGAKS) is disordered.

It belongs to the universal ribosomal protein uS13 family. In terms of assembly, part of the 30S ribosomal subunit. Forms a loose heterodimer with protein S19. Forms two bridges to the 50S subunit in the 70S ribosome.

In terms of biological role, located at the top of the head of the 30S subunit, it contacts several helices of the 16S rRNA. In the 70S ribosome it contacts the 23S rRNA (bridge B1a) and protein L5 of the 50S subunit (bridge B1b), connecting the 2 subunits; these bridges are implicated in subunit movement. Contacts the tRNAs in the A and P-sites. This chain is Small ribosomal subunit protein uS13, found in Campylobacter jejuni subsp. jejuni serotype O:23/36 (strain 81-176).